A 1009-amino-acid chain; its full sequence is MICAL-like protein 2 (1009 aa).

The region spanning 1-107 is the Calponin-homology (CH) domain; the sequence is MAAIKALQEW…YVSQYYNYFH (107 aa). The interval 1–260 is forms an intramolecular interaction with the C-terminal coiled coil domain keeping the protein in a closed conformation; it reads MAAIKALQEW…KSSNLASRKP (260 aa). A phosphoserine mark is found at serine 110, serine 143, and serine 153. Disordered regions lie at residues 114–180, 247–268, 348–447, and 655–834; these read GMAG…PGTA, SVSP…ADTR, NSSP…TSKV, and SPSI…TSPV. A compositionally biased stretch (polar residues) spans 144–171; the sequence is PAQTQRSPLSPARTNPVVQRNEGGSQRP. The LIM zinc-binding domain occupies 186 to 248; it reads SICGVCGKHV…THHSSEVTSV (63 aa). At serine 249 the chain carries Phosphoserine. The segment at 261–393 is necessary and sufficient for interaction with actinins; sequence GGVTADTRPF…QGQTASKGVK (133 aa). A mediates targeting to the cell plasma membrane region spans residues 261 to 805; it reads GGVTADTRPF…EDGTRSCKEE (545 aa). The span at 348–419 shows a compositional bias: polar residues; it reads NSSPIGWSSP…AWTSSASKTQ (72 aa). A compositionally biased stretch (pro residues) spans 430–442; it reads PSAPAPASAPAPA. Residues 694 to 730 are compositionally biased toward basic and acidic residues; the sequence is EGWRARLKPVDKKTPAGRSLEQKEPVLAEPRIGDTSR. Low complexity-rich tracts occupy residues 731 to 746 and 755 to 769; these read KASS…TLTS and PAGS…SPSP. Phosphoserine occurs at positions 766 and 768. Residues 791-817 show a composition bias toward basic and acidic residues; it reads EPKKQEDGTRSCKEEKSPTRWSRERSA. Residues 806 to 913 form a forms an intramolecular interaction with the N-terminal Calponin-homology and LIM zinc-binding domains-containing region keeping the protein in a closed conformation region; it reads KSPTRWSRER…LMYKSKDQRL (108 aa). A Phosphoserine modification is found at serine 832. A bMERB domain is found at 833–980; the sequence is PVRLHPDYIP…EQEEDQMLEN (148 aa). The stretch at 841–880 forms a coiled coil; it reads IPQEELQRQLQDIESQLDALELRGVELEKRLRAAEGDASE. The segment at 913–1009 is mediates interaction with RAB13 and is required for transition from the closed to the open conformation; it reads LEEQQLDLQG…WSSKSKSGQA (97 aa).

In terms of assembly, interacts with RAB13 (GTP-bound form); competes with RAB8A and is involved in tight junctions assembly. Interacts with RAB8A; competes with RAB13 and is involved in E-cadherin endocytic recycling. Interacts with RAB8B. Interacts (preferentially in opened conformation) with ACTN1 and ACTN4; stimulated by RAB13 activation. Interacts (via calponin-homology (CH) domain) with the filamins FLNA, FLNB and FLNC (via actin-binding domain). In terms of tissue distribution, detected in brain, lung, liver and kidney (at protein level).

The protein localises to the cell membrane. The protein resides in the cell junction. It localises to the tight junction. Its subcellular location is the recycling endosome. It is found in the cell projection. The protein localises to the neuron projection. The protein resides in the cytoplasm. It localises to the cytoskeleton. Functionally, effector of small Rab GTPases RAB8A and RAB13 which is involved in junctional complexes assembly through the regulation of cell adhesion molecules transport to the plasma membrane and actin cytoskeleton reorganization. Regulates the endocytic recycling of occludins, claudins and E-cadherin to the plasma membrane and may thereby regulate the establishment of tight junctions and adherens junctions. In parallel, may regulate actin cytoskeleton reorganization directly through interaction with F-actin or indirectly through actinins and filamins. Undergoes liquid-liquid phase separation to form tubular recycling endosomes. Plays 2 sequential roles in the biogenesis of tubular recycling endosomes: first organizes phase separation and then the closed form formed by interaction with RAB8A promotes endosomal tubulation. The chain is MICAL-like protein 2 (Micall2) from Mus musculus (Mouse).